The chain runs to 348 residues: Fasciculation and elongation protein zeta-2 (348 aa).

Residues 11–40 form a disordered region; that stretch reads YEFQEPAGSVQEQENCNASPEAGAGAHAGG. 3 positions are modified to phosphoserine: Ser-130, Ser-171, and Ser-190. The stretch at 206–280 forms a coiled coil; sequence ERVKRLSVSE…TAKKKKKLKS (75 aa). The segment at 265–296 is disordered; that stretch reads QKEHKETAKKKKKLKSGSSQNGRSERSHMPGT.

It belongs to the zygin family. In terms of assembly, homodimer; disulfide-linked. May form heterodimers with FEZ1. Interacts with synaptotagmin.

Involved in axonal outgrowth and fasciculation. The polypeptide is Fasciculation and elongation protein zeta-2 (Fez2) (Mus musculus (Mouse)).